A 548-amino-acid polypeptide reads, in one-letter code: 5-epi-aristolochene synthase 2 (548 aa).

Mg(2+)-binding residues include aspartate 301, aspartate 305, aspartate 444, threonine 448, and glutamate 452. Positions 301–305 (DDTFD) match the DDXXD motif motif.

It belongs to the terpene synthase family. Monomer. Mg(2+) is required as a cofactor. In terms of tissue distribution, expressed in roots, but not in shoots.

It localises to the cytoplasm. It catalyses the reaction (2E,6E)-farnesyl diphosphate = (+)-5-epi-aristolochene + diphosphate. The protein operates within secondary metabolite biosynthesis; terpenoid biosynthesis. Functionally, catalyzes the cyclization of trans,trans-farnesyl diphosphate (FPP) to the bicyclic intermediate 5-epi-aristolochene, initial step in the conversion of FPP to the sesquiterpenoid antifungal phytoalexin capsidiol. Produces germacrene A as an enzyme-bound intermediate that is not released by the enzyme, but is further cyclized to produce the bicyclic 5-epi-aristolochene. This chain is 5-epi-aristolochene synthase 2, found in Nicotiana attenuata (Coyote tobacco).